The following is a 92-amino-acid chain: Protein 10 (92 aa).

The EF-hand domain occupies 18–29 (FMQKYDKNSDQH).

It belongs to the calbindin family. In terms of tissue distribution, brain.

This Cavia porcellus (Guinea pig) protein is Protein 10.